Consider the following 275-residue polypeptide: Dermonecrotic toxin SpaSicTox-betaIIA2 (275 aa).

The active site involves His5. Residues Glu25 and Asp27 each contribute to the Mg(2+) site. His41 (nucleophile) is an active-site residue. 2 cysteine pairs are disulfide-bonded: Cys45/Cys51 and Cys47/Cys190. A Mg(2+)-binding site is contributed by Asp85.

Belongs to the arthropod phospholipase D family. Class II subfamily. Requires Mg(2+) as cofactor. As to expression, expressed by the venom gland.

It is found in the secreted. The catalysed reaction is an N-(acyl)-sphingosylphosphocholine = an N-(acyl)-sphingosyl-1,3-cyclic phosphate + choline. It carries out the reaction an N-(acyl)-sphingosylphosphoethanolamine = an N-(acyl)-sphingosyl-1,3-cyclic phosphate + ethanolamine. It catalyses the reaction a 1-acyl-sn-glycero-3-phosphocholine = a 1-acyl-sn-glycero-2,3-cyclic phosphate + choline. The enzyme catalyses a 1-acyl-sn-glycero-3-phosphoethanolamine = a 1-acyl-sn-glycero-2,3-cyclic phosphate + ethanolamine. In terms of biological role, dermonecrotic toxins cleave the phosphodiester linkage between the phosphate and headgroup of certain phospholipids (sphingolipid and lysolipid substrates), forming an alcohol (often choline) and a cyclic phosphate. This toxin acts on sphingomyelin (SM). It may also act on ceramide phosphoethanolamine (CPE), lysophosphatidylcholine (LPC) and lysophosphatidylethanolamine (LPE), but not on lysophosphatidylserine (LPS), and lysophosphatidylglycerol (LPG). It acts by transphosphatidylation, releasing exclusively cyclic phosphate products as second products. Induces dermonecrosis, hemolysis, increased vascular permeability, edema, inflammatory response, and platelet aggregation. This is Dermonecrotic toxin SpaSicTox-betaIIA2 from Sicarius patagonicus (Six-eyed sand spider).